A 1092-amino-acid chain; its full sequence is SUMO-specific isopeptidase USPL1 (1092 aa).

2 disordered regions span residues 145 to 168 and 185 to 207; these read VYDETSSNLPDSSGQQNPIRTADS and TKDPATVDVSGTGRPSPQNEGCT. Polar residues-rich tracts occupy residues 148 to 163 and 197 to 206; these read ETSSNLPDSSGQQNPI and GRPSPQNEGC. The region spanning 227-500 is the USP domain; that stretch reads VQWKNAYALC…EIHIVIWERK (274 aa). Catalysis depends on cysteine 236, which acts as the Nucleophile. Residues 236–495 form an SUMO-binding region; sequence CWLDCILSAL…EVPASEIHIV (260 aa). Histidine 456 (proton acceptor) is an active-site residue. 3 disordered regions span residues 713 to 749, 797 to 859, and 904 to 930; these read LKPERVTSQVSNLKKKETTADSQTTTSKSLQNQSLKE, GGFK…STSC, and AALMSSPQSRTVRSENLEQVPQDGSPN. The segment covering 732–748 has biased composition (polar residues); that stretch reads ADSQTTTSKSLQNQSLK. Basic residues predominate over residues 810–819; that stretch reads HVSKKARKSA. A compositionally biased stretch (pro residues) spans 821–832; the sequence is KPPPISKPPAGP. At serine 909 the chain carries Phosphoserine.

The protein belongs to the peptidase C19 family. In terms of assembly, interacts with ELL.

The protein localises to the nucleus. Its subcellular location is the cajal body. SUMO-specific isopeptidase involved in protein desumoylation. Specifically binds SUMO proteins with a higher affinity for SUMO2 and SUMO3 which it cleaves more efficiently. Also able to process full-length SUMO proteins to their mature forms. Plays a key role in RNA polymerase-II-mediated snRNA transcription in the Cajal bodies. Is a component of complexes that can bind to U snRNA genes. This is SUMO-specific isopeptidase USPL1 (USPL1) from Homo sapiens (Human).